Reading from the N-terminus, the 273-residue chain is Bifunctional protein FolD (273 aa).

NADP(+) is bound by residues 149–151 (GLG) and V215.

This sequence belongs to the tetrahydrofolate dehydrogenase/cyclohydrolase family. In terms of assembly, homodimer.

It carries out the reaction (6R)-5,10-methylene-5,6,7,8-tetrahydrofolate + NADP(+) = (6R)-5,10-methenyltetrahydrofolate + NADPH. The catalysed reaction is (6R)-5,10-methenyltetrahydrofolate + H2O = (6R)-10-formyltetrahydrofolate + H(+). Its pathway is one-carbon metabolism; tetrahydrofolate interconversion. Functionally, catalyzes the oxidation of 5,10-methylenetetrahydrofolate to 5,10-methenyltetrahydrofolate and then the hydrolysis of 5,10-methenyltetrahydrofolate to 10-formyltetrahydrofolate. The protein is Bifunctional protein FolD of Mycoplasma genitalium (strain ATCC 33530 / DSM 19775 / NCTC 10195 / G37) (Mycoplasmoides genitalium).